A 100-amino-acid chain; its full sequence is Replication restart protein PriB (100 aa).

The region spanning 1–100 (MTNRIELSGV…VLHADKISQI (100 aa)) is the SSB domain.

The protein belongs to the PriB family. As to quaternary structure, homodimer. Interacts with PriA and DnaT. Component of the replication restart primosome. Primosome assembly occurs via a 'hand-off' mechanism. PriA binds to replication forks, subsequently PriB then DnaT bind; DnaT then displaces ssDNA to generate the helicase loading substrate.

Involved in the restart of stalled replication forks, which reloads the replicative helicase on sites other than the origin of replication; the PriA-PriB pathway is the major replication restart pathway. During primosome assembly it facilitates complex formation between PriA and DnaT on DNA; stabilizes PriA on DNA. Stimulates the DNA unwinding activity of PriA helicase. The protein is Replication restart protein PriB of Vibrio cholerae serotype O1 (strain ATCC 39315 / El Tor Inaba N16961).